We begin with the raw amino-acid sequence, 314 residues long: DNA-directed RNA polymerase subunit alpha (314 aa).

Positions Met1 to Thr228 are alpha N-terminal domain (alpha-NTD). Positions Lys245–Asp314 are alpha C-terminal domain (alpha-CTD).

The protein belongs to the RNA polymerase alpha chain family. In terms of assembly, homodimer. The RNAP catalytic core consists of 2 alpha, 1 beta, 1 beta' and 1 omega subunit. When a sigma factor is associated with the core the holoenzyme is formed, which can initiate transcription.

The enzyme catalyses RNA(n) + a ribonucleoside 5'-triphosphate = RNA(n+1) + diphosphate. Its function is as follows. DNA-dependent RNA polymerase catalyzes the transcription of DNA into RNA using the four ribonucleoside triphosphates as substrates. The protein is DNA-directed RNA polymerase subunit alpha of Geobacillus thermodenitrificans (strain NG80-2).